Reading from the N-terminus, the 147-residue chain is Large ribosomal subunit protein uL16c (147 aa).

Positions Met-1–Met-17 are enriched in basic residues. A disordered region spans residues Met-1–Ile-20.

This sequence belongs to the universal ribosomal protein uL16 family. Part of the 50S ribosomal subunit.

It is found in the plastid. The protein localises to the chloroplast. The sequence is that of Large ribosomal subunit protein uL16c from Ipomoea purpurea (Common morning glory).